Consider the following 354-residue polypeptide: Trans-L-3-hydroxyproline dehydratase (354 aa).

Cysteine 104 serves as the catalytic Proton acceptor. Residues 105-106, aspartate 269, and 274-275 contribute to the substrate site; these read GH and GS.

This sequence belongs to the proline racemase family. In terms of assembly, homodimer.

The catalysed reaction is trans-3-hydroxy-L-proline = 1-pyrroline-2-carboxylate + H2O. Its function is as follows. Catalyzes the dehydration of trans-3-hydroxy-L-proline to delta-1-pyrroline-2-carboxylate (Pyr2C). The polypeptide is Trans-L-3-hydroxyproline dehydratase (L3HYPDH) (Pongo abelii (Sumatran orangutan)).